The following is a 588-amino-acid chain: Aspartate--tRNA ligase (588 aa).

Glu177 is an L-aspartate binding site. An aspartate region spans residues 201–204 (QLFK). An L-aspartate-binding site is contributed by Arg223. Residues 223 to 225 (RDE) and Gln232 contribute to the ATP site. His451 lines the L-aspartate pocket. Glu485 is an ATP binding site. Arg492 is an L-aspartate binding site. ATP is bound at residue 537-540 (GLDR).

This sequence belongs to the class-II aminoacyl-tRNA synthetase family. Type 1 subfamily. Homodimer.

The protein resides in the cytoplasm. The enzyme catalyses tRNA(Asp) + L-aspartate + ATP = L-aspartyl-tRNA(Asp) + AMP + diphosphate. In terms of biological role, catalyzes the attachment of L-aspartate to tRNA(Asp) in a two-step reaction: L-aspartate is first activated by ATP to form Asp-AMP and then transferred to the acceptor end of tRNA(Asp). This Staphylococcus aureus (strain Newman) protein is Aspartate--tRNA ligase.